The sequence spans 237 residues: UPF0053 protein HI_0056 (237 aa).

The next 7 helical transmembrane spans lie at 12-32 (ISLV…IIFI), 49-69 (ILGL…LAWI), 90-110 (ILLI…KEAI), 126-146 (YLGV…DSVI), 151-171 (MASH…VMMF), 188-208 (ILAL…SLDI), and 210-230 (IPKG…MINI).

The protein belongs to the UPF0053 family.

The protein localises to the cell membrane. In Haemophilus influenzae (strain ATCC 51907 / DSM 11121 / KW20 / Rd), this protein is UPF0053 protein HI_0056.